The sequence spans 219 residues: Transmembrane protein 125 (219 aa).

Helical transmembrane passes span 36–56, 68–88, 114–134, and 147–167; these read LCFV…VALL, LATG…QLMS, ALVV…LAGL, and MLSV…GLLL.

It localises to the membrane. The protein is Transmembrane protein 125 (TMEM125) of Homo sapiens (Human).